We begin with the raw amino-acid sequence, 255 residues long: Indole-3-glycerol phosphate synthase (255 aa).

This sequence belongs to the TrpC family.

It catalyses the reaction 1-(2-carboxyphenylamino)-1-deoxy-D-ribulose 5-phosphate + H(+) = (1S,2R)-1-C-(indol-3-yl)glycerol 3-phosphate + CO2 + H2O. It participates in amino-acid biosynthesis; L-tryptophan biosynthesis; L-tryptophan from chorismate: step 4/5. This chain is Indole-3-glycerol phosphate synthase, found in Streptococcus sanguinis (strain SK36).